A 299-amino-acid polypeptide reads, in one-letter code: Regucalcin (299 aa).

E18 contributes to the a divalent metal cation binding site. Substrate contacts are provided by R101, N103, and E121. An N6-succinyllysine modification is found at K144. A divalent metal cation-binding residues include N154 and D204. The active-site Proton donor/acceptor is D204. N6-succinyllysine is present on residues K244 and K253. Position 268 is a phosphoserine (S268).

Belongs to the SMP-30/CGR1 family. In terms of assembly, monomer. The cofactor is Zn(2+). Mn(2+) serves as cofactor. Requires Ca(2+) as cofactor. It depends on Mg(2+) as a cofactor. Co(2+) is required as a cofactor. Post-translationally, the N-terminus is blocked. As to expression, detected in liver (at protein level). Hepatocytes and renal proximal tubular epithelium.

It is found in the cytoplasm. It catalyses the reaction D-glucono-1,5-lactone + H2O = D-gluconate + H(+). It functions in the pathway cofactor biosynthesis; L-ascorbate biosynthesis via UDP-alpha-D-glucuronate pathway; L-ascorbate from UDP-alpha-D-glucuronate: step 3/4. In terms of biological role, gluconolactonase with low activity towards other sugar lactones, including gulonolactone and galactonolactone. Catalyzes a key step in ascorbic acid (vitamin C) biosynthesis. Can also hydrolyze diisopropyl phosphorofluoridate and phenylacetate (in vitro). Calcium-binding protein. Modulates Ca(2+) signaling, and Ca(2+)-dependent cellular processes and enzyme activities. This is Regucalcin (Rgn) from Rattus norvegicus (Rat).